The chain runs to 338 residues: Eukaryotic translation initiation factor 3 subunit H (338 aa).

Residues 22-154 enclose the MPN domain; sequence VQCDGLAVMK…LKAYRLTPQA (133 aa).

This sequence belongs to the eIF-3 subunit H family. As to quaternary structure, component of the eukaryotic translation initiation factor 3 (eIF-3) complex. The eIF-3 complex interacts with pix. Interacts with mxt.

It localises to the cytoplasm. In terms of biological role, component of the eukaryotic translation initiation factor 3 (eIF-3) complex, which is involved in protein synthesis of a specialized repertoire of mRNAs and, together with other initiation factors, stimulates binding of mRNA and methionyl-tRNAi to the 40S ribosome. The eIF-3 complex specifically targets and initiates translation of a subset of mRNAs involved in cell proliferation. This Drosophila sechellia (Fruit fly) protein is Eukaryotic translation initiation factor 3 subunit H.